A 497-amino-acid chain; its full sequence is GTPase-activating protein GYP8 (497 aa).

A Rab-GAP TBC domain is found at 69–281 (FVNNSLRKDC…QIFDMTISMQ (213 aa)).

This chain is GTPase-activating protein GYP8 (GYP8), found in Saccharomyces cerevisiae (strain ATCC 204508 / S288c) (Baker's yeast).